The following is a 162-amino-acid chain: Ribose-5-phosphate isomerase B (162 aa).

Residues 11–12 (DH) and 70–74 (GSGNG) each bind D-ribulose 5-phosphate. Residue Glu-75 is the Proton acceptor of the active site. His-102 functions as the Proton donor in the catalytic mechanism. Residues Asn-103, Arg-113, Arg-137, and Arg-141 each contribute to the D-ribulose 5-phosphate site.

Belongs to the LacAB/RpiB family. As to quaternary structure, homodimer.

The enzyme catalyses aldehydo-D-ribose 5-phosphate = D-ribulose 5-phosphate. The protein operates within carbohydrate degradation; pentose phosphate pathway; D-ribose 5-phosphate from D-ribulose 5-phosphate (non-oxidative stage): step 1/1. Its function is as follows. Catalyzes the interconversion of ribulose-5-P and ribose-5-P. The polypeptide is Ribose-5-phosphate isomerase B (Mycobacterium bovis (strain ATCC BAA-935 / AF2122/97)).